The sequence spans 107 residues: UPF0145 protein BT_3410 (107 aa).

Belongs to the UPF0145 family.

This is UPF0145 protein BT_3410 from Bacteroides thetaiotaomicron (strain ATCC 29148 / DSM 2079 / JCM 5827 / CCUG 10774 / NCTC 10582 / VPI-5482 / E50).